The primary structure comprises 126 residues: Non-specific lipid-transfer protein 15 (126 aa).

A signal peptide spans 1–22 (MSKSIFVVCITLLVVLSPTLNA). Intrachain disulfides connect C34-C80, C45-C57, C58-C100, and C78-C114.

Belongs to the plant LTP family.

Functionally, plant non-specific lipid-transfer proteins transfer phospholipids as well as galactolipids across membranes. May play a role in wax or cutin deposition in the cell walls of expanding epidermal cells and certain secretory tissues. In Arabidopsis thaliana (Mouse-ear cress), this protein is Non-specific lipid-transfer protein 15 (LTP15).